The primary structure comprises 288 residues: Bifunctional protein FolD (288 aa).

Residues 164-166 (GTS) and Ile-230 contribute to the NADP(+) site.

It belongs to the tetrahydrofolate dehydrogenase/cyclohydrolase family. Homodimer.

The catalysed reaction is (6R)-5,10-methylene-5,6,7,8-tetrahydrofolate + NADP(+) = (6R)-5,10-methenyltetrahydrofolate + NADPH. The enzyme catalyses (6R)-5,10-methenyltetrahydrofolate + H2O = (6R)-10-formyltetrahydrofolate + H(+). Its pathway is one-carbon metabolism; tetrahydrofolate interconversion. Functionally, catalyzes the oxidation of 5,10-methylenetetrahydrofolate to 5,10-methenyltetrahydrofolate and then the hydrolysis of 5,10-methenyltetrahydrofolate to 10-formyltetrahydrofolate. This Mycoplasma mycoides subsp. mycoides SC (strain CCUG 32753 / NCTC 10114 / PG1) protein is Bifunctional protein FolD.